Reading from the N-terminus, the 566-residue chain is MTTREYDYIICGAGSAGNVLATRLTEDPDVTVLLLEAGGPDYRFDFRTQMPAALAYPLQGRRYNWAYETDPEPHMDNRRMECGRGKGLGGSSLINGMCYIRGNALDYDNWSTHKGLENWTYLDCLPYFKKAETRDVGPNDYHGGSGPVSVTTSKPGVNPLFEAMVDAGVQAGYPRTDDLNGYQQEGFGPMDRTVTPKGRRASTARGYLDQAKVRPNLEIVTHALADRILFDGKRASGVTYLRGSERATAHARREVLVCSGAIASPQLLQRSGVGPGAWLKELDIPVVLDLPGVGQNLQDHLEMYIQYECKEPVSLYPALKWWNQPKIGLEWMLNGTGLGASNHFEAGGFIRTRDDDPWPNIQYHFLPVAINYNGSNAIEMHGFQAHVGSMRSPSRGRVKLRSRDPNDHPSILFNYMAEALDWREFRDAIRATREIMRQPALDRYRGRELNPGADCKSDKELDAFVRARAETAFHPSCSCKMGYDDMAVVDEEGRVHGLDGLRVVDASIMPIITTGNLNAPTIMIAEKIADKIRGRTPLARVDVPYFVANGAPARNVAKAVRQPETV.

7-36 contributes to the FAD binding site; sequence DYIICGAGSAGNVLATRLTEDPDVTVLLLE. A disordered region spans residues 180-202; that stretch reads NGYQQEGFGPMDRTVTPKGRRAS. The active-site Proton acceptor is the His-474.

This sequence belongs to the GMC oxidoreductase family. Requires FAD as cofactor.

The enzyme catalyses choline + A = betaine aldehyde + AH2. It catalyses the reaction betaine aldehyde + NAD(+) + H2O = glycine betaine + NADH + 2 H(+). The protein operates within amine and polyamine biosynthesis; betaine biosynthesis via choline pathway; betaine aldehyde from choline (cytochrome c reductase route): step 1/1. Functionally, involved in the biosynthesis of the osmoprotectant glycine betaine. Catalyzes the oxidation of choline to betaine aldehyde and betaine aldehyde to glycine betaine at the same rate. The protein is Oxygen-dependent choline dehydrogenase of Burkholderia cenocepacia (strain HI2424).